Reading from the N-terminus, the 123-residue chain is Large ribosomal subunit protein uL24 (123 aa).

Belongs to the universal ribosomal protein uL24 family. As to quaternary structure, part of the 50S ribosomal subunit.

One of two assembly initiator proteins, it binds directly to the 5'-end of the 23S rRNA, where it nucleates assembly of the 50S subunit. In terms of biological role, one of the proteins that surrounds the polypeptide exit tunnel on the outside of the subunit. The protein is Large ribosomal subunit protein uL24 of Kineococcus radiotolerans (strain ATCC BAA-149 / DSM 14245 / SRS30216).